The following is an 81-amino-acid chain: Exodeoxyribonuclease 7 small subunit (81 aa).

Belongs to the XseB family. As to quaternary structure, heterooligomer composed of large and small subunits.

It is found in the cytoplasm. It carries out the reaction Exonucleolytic cleavage in either 5'- to 3'- or 3'- to 5'-direction to yield nucleoside 5'-phosphates.. Functionally, bidirectionally degrades single-stranded DNA into large acid-insoluble oligonucleotides, which are then degraded further into small acid-soluble oligonucleotides. The protein is Exodeoxyribonuclease 7 small subunit of Rhodopseudomonas palustris (strain BisA53).